The chain runs to 247 residues: DNA polymerase sliding clamp (247 aa).

The protein belongs to the PCNA family. As to quaternary structure, homotrimer. The subunits circularize to form a toroid; DNA passes through its center. Replication factor C (RFC) is required to load the toroid on the DNA.

Its function is as follows. Sliding clamp subunit that acts as a moving platform for DNA processing. Responsible for tethering the catalytic subunit of DNA polymerase and other proteins to DNA during high-speed replication. In Natronomonas pharaonis (strain ATCC 35678 / DSM 2160 / CIP 103997 / JCM 8858 / NBRC 14720 / NCIMB 2260 / Gabara) (Halobacterium pharaonis), this protein is DNA polymerase sliding clamp.